A 350-amino-acid chain; its full sequence is Nicotinate-nucleotide--dimethylbenzimidazole phosphoribosyltransferase (350 aa).

Glu-317 serves as the catalytic Proton acceptor.

This sequence belongs to the CobT family.

It catalyses the reaction 5,6-dimethylbenzimidazole + nicotinate beta-D-ribonucleotide = alpha-ribazole 5'-phosphate + nicotinate + H(+). It participates in nucleoside biosynthesis; alpha-ribazole biosynthesis; alpha-ribazole from 5,6-dimethylbenzimidazole: step 1/2. Functionally, catalyzes the synthesis of alpha-ribazole-5'-phosphate from nicotinate mononucleotide (NAMN) and 5,6-dimethylbenzimidazole (DMB). This chain is Nicotinate-nucleotide--dimethylbenzimidazole phosphoribosyltransferase, found in Shewanella oneidensis (strain ATCC 700550 / JCM 31522 / CIP 106686 / LMG 19005 / NCIMB 14063 / MR-1).